The sequence spans 711 residues: Polyribonucleotide nucleotidyltransferase (711 aa).

2 residues coordinate Mg(2+): Asp-486 and Asp-492. The 60-residue stretch at 553–612 folds into the KH domain; the sequence is PRIHTIKINPDKIKDVIGKGGSVIRALTEETGTTIEIEDDGTVKIAATDGDKAQHAIRRI. The S1 motif domain maps to 622–690; the sequence is GRIYNGKVTR…RQGRVRLSIK (69 aa). The disordered stretch occupies residues 689 to 711; the sequence is IKEATEQTPSAAAPEAPAAEQGE. The segment covering 694 to 711 has biased composition (low complexity); sequence EQTPSAAAPEAPAAEQGE.

This sequence belongs to the polyribonucleotide nucleotidyltransferase family. In terms of assembly, component of the RNA degradosome, which is a multiprotein complex involved in RNA processing and mRNA degradation. Requires Mg(2+) as cofactor.

The protein resides in the cytoplasm. The enzyme catalyses RNA(n+1) + phosphate = RNA(n) + a ribonucleoside 5'-diphosphate. Functionally, involved in mRNA degradation. Catalyzes the phosphorolysis of single-stranded polyribonucleotides processively in the 3'- to 5'-direction. This Klebsiella pneumoniae subsp. pneumoniae (strain ATCC 700721 / MGH 78578) protein is Polyribonucleotide nucleotidyltransferase.